The chain runs to 483 residues: Glutamate--tRNA ligase (483 aa).

A 'HIGH' region motif is present at residues 9-19 (PSPTGYLHIGN). The 'KMSKS' region motif lies at 250–254 (KLSKR). K253 is an ATP binding site.

It belongs to the class-I aminoacyl-tRNA synthetase family. Glutamate--tRNA ligase type 1 subfamily. As to quaternary structure, monomer.

It localises to the cytoplasm. It catalyses the reaction tRNA(Glu) + L-glutamate + ATP = L-glutamyl-tRNA(Glu) + AMP + diphosphate. Functionally, catalyzes the attachment of glutamate to tRNA(Glu) in a two-step reaction: glutamate is first activated by ATP to form Glu-AMP and then transferred to the acceptor end of tRNA(Glu). This is Glutamate--tRNA ligase from Blochmanniella floridana.